The following is a 192-amino-acid chain: Putative manganese efflux pump MntP (192 aa).

Helical transmembrane passes span 3 to 23 (FSAILLLALGLAMDATAVAAA), 36 to 56 (VLLVAGFFGGAQALMPVIGWL), 65 to 85 (VQAWDHWIAFVLLAFIGGKML), 112 to 132 (FVLAIATSIDALAVGITLPML), 136 to 156 (FAISVVTIGVVTALLSAAGLF), and 171 to 191 (LAGGVVLIGLGFKILLEHLVL).

This sequence belongs to the MntP (TC 9.B.29) family.

It is found in the cell inner membrane. Probably functions as a manganese efflux pump. The sequence is that of Putative manganese efflux pump MntP from Sorangium cellulosum (strain So ce56) (Polyangium cellulosum (strain So ce56)).